The chain runs to 156 residues: ATP synthase subunit b (156 aa).

The chain crosses the membrane as a helical span at residues 5–25; sequence LTMIGQAIAFFIFVVFCMKYV.

The protein belongs to the ATPase B chain family. In terms of assembly, F-type ATPases have 2 components, F(1) - the catalytic core - and F(0) - the membrane proton channel. F(1) has five subunits: alpha(3), beta(3), gamma(1), delta(1), epsilon(1). F(0) has three main subunits: a(1), b(2) and c(10-14). The alpha and beta chains form an alternating ring which encloses part of the gamma chain. F(1) is attached to F(0) by a central stalk formed by the gamma and epsilon chains, while a peripheral stalk is formed by the delta and b chains.

The protein localises to the cell inner membrane. Its function is as follows. F(1)F(0) ATP synthase produces ATP from ADP in the presence of a proton or sodium gradient. F-type ATPases consist of two structural domains, F(1) containing the extramembraneous catalytic core and F(0) containing the membrane proton channel, linked together by a central stalk and a peripheral stalk. During catalysis, ATP synthesis in the catalytic domain of F(1) is coupled via a rotary mechanism of the central stalk subunits to proton translocation. In terms of biological role, component of the F(0) channel, it forms part of the peripheral stalk, linking F(1) to F(0). This Hahella chejuensis (strain KCTC 2396) protein is ATP synthase subunit b.